The primary structure comprises 94 residues: Cell division topological specificity factor (94 aa).

The protein belongs to the MinE family.

In terms of biological role, prevents the cell division inhibition by proteins MinC and MinD at internal division sites while permitting inhibition at polar sites. This ensures cell division at the proper site by restricting the formation of a division septum at the midpoint of the long axis of the cell. The sequence is that of Cell division topological specificity factor from Alkalilimnicola ehrlichii (strain ATCC BAA-1101 / DSM 17681 / MLHE-1).